A 428-amino-acid chain; its full sequence is MAQILAPSIQCQTRITKTSPLATPISSKMWSSLVMKQNKKVARSAKFRVMAINSGTINRVEDLLNLDITPFTDSIIAEYIWIGGTGIDVRSKSRTISKPVEHPSELPKWNYDGSSTGQAPGEDSEVILYPQAIFKDPFRGGNNILVICDAYTPQGEPIPTNKRHKAAEIFSNPKVEAEIPWYGIEQEYTLLQTDVKWPLGWPVGGYPGPQGPYYCAAGADKSFGRDISDAHYKACLYAGINISGTNGEVMPGQWEYQVGPSVGIEAGDHIWASRYILERITEQAGVVLTLDPKPIEGDWNGAGCHTNYSTKSMREDGGFEVIKKAILNLSLRHKVHIEAYGEGNERRLTGKHETASINTFSWGVANRGCSIRVGRDTEKNGKGYLEDRRPASNMDPYVVTALLAESTLLWEPTLEAEALAAQKIALKV.

The N-terminal 49 residues, 1 to 49, are a transit peptide targeting the chloroplast; sequence MAQILAPSIQCQTRITKTSPLATPISSKMWSSLVMKQNKKVARSAKFRV. The 81-residue stretch at 75-155 folds into the GS beta-grasp domain; it reads IIAEYIWIGG…VICDAYTPQG (81 aa). The GS catalytic domain maps to 159–428; that stretch reads PTNKRHKAAE…LAAQKIALKV (270 aa).

It belongs to the glutamine synthetase family. Homooctamer.

It is found in the plastid. The protein resides in the chloroplast. The enzyme catalyses L-glutamate + NH4(+) + ATP = L-glutamine + ADP + phosphate + H(+). The light-modulated chloroplast enzyme, encoded by a nuclear gene and expressed primarily in leaves, is responsible for the reassimilation of the ammonia generated by photorespiration. The polypeptide is Glutamine synthetase leaf isozyme, chloroplastic (GS2) (Medicago sativa (Alfalfa)).